The primary structure comprises 475 residues: Ribulose bisphosphate carboxylase large chain (475 aa).

Residues 1-2 constitute a propeptide that is removed on maturation; the sequence is MS. P3 bears the N-acetylproline mark. Residue K14 is modified to N6,N6,N6-trimethyllysine. Residues N123 and T173 each coordinate substrate. Catalysis depends on K175, which acts as the Proton acceptor. K177 lines the substrate pocket. Mg(2+)-binding residues include K201, D203, and E204. Residue K201 is modified to N6-carboxylysine. H294 functions as the Proton acceptor in the catalytic mechanism. Substrate contacts are provided by R295, H327, and S379.

Belongs to the RuBisCO large chain family. Type I subfamily. In terms of assembly, heterohexadecamer of 8 large chains and 8 small chains; disulfide-linked. The disulfide link is formed within the large subunit homodimers. Mg(2+) is required as a cofactor. Post-translationally, the disulfide bond which can form in the large chain dimeric partners within the hexadecamer appears to be associated with oxidative stress and protein turnover.

The protein resides in the plastid. It localises to the chloroplast. It catalyses the reaction 2 (2R)-3-phosphoglycerate + 2 H(+) = D-ribulose 1,5-bisphosphate + CO2 + H2O. The enzyme catalyses D-ribulose 1,5-bisphosphate + O2 = 2-phosphoglycolate + (2R)-3-phosphoglycerate + 2 H(+). RuBisCO catalyzes two reactions: the carboxylation of D-ribulose 1,5-bisphosphate, the primary event in carbon dioxide fixation, as well as the oxidative fragmentation of the pentose substrate in the photorespiration process. Both reactions occur simultaneously and in competition at the same active site. In Populus trichocarpa (Western balsam poplar), this protein is Ribulose bisphosphate carboxylase large chain.